A 778-amino-acid polypeptide reads, in one-letter code: MEPRQLFSDPTADPISTAGAASNALSCASFNLPEGGILQLPNGEIITLSAPAAFKPPSCNLALRSVPNIIASGGVVGGTASGTMGLKADDDSHFSDWRDPFYASTFPQCYALAATTIIAYTLVIMLFITPRSFLDGGVVVLGRKGFTNGGGGTSIGGRPWLQKVAALSVAISLTIANAATFRAAEQQYSWGVQNAKQLQEDVLGGAELKIIRIISDTFLWLAQAQTLIRLFPRQREKVIIKWTAFALITLDVIFQSLNSFKYGGSDLTRPKFTEAVPALSYLFALALGVLYAAWVLYYSIMKKRYAFYHPLMKNMILVAVLSVVSILVPVVFFILDISKPDFAGWGDYVRWVGAAAASVIVWEWVERIEALEREEKKDGILGREVFDGDEMLEASQSEHAWPKMKRKGSGGSDSQDTESGGGGKDGGPSLSRFGAWSKISTLTSKHRTEPSSRNEPNEGSSPVAETTNDDERPRFLSPPLWPARPTPAATPVSRTDTTSAASTMYAVRYHTMTELTSYGTPPPTRNMGRLSGSESRGSSRHRDYGSASPGSAPAQDARSTQNSHVGAKASSAGSRWHALTPTVSSRDFVTRSEPRSSKMQRDENSRWDLRARVEEFAATQAENLREKFRPTLDTNNLPVTVIPAPPRRGAAIAQLCEEEELNHSSREGTVREESRNSNASGTVIAVGGAQTPIQTSFSPPPRAANSSMSTAQMPRPQLSPIVTQGSFTNNRYNHLPVTVIPAPPRQDPARAPSQPQSPSLVALGKQPARSDSSTTPSP.

The Extracellular portion of the chain corresponds to 1–108; the sequence is MEPRQLFSDP…DPFYASTFPQ (108 aa). The helical transmembrane segment at 109–129 threads the bilayer; that stretch reads CYALAATTIIAYTLVIMLFIT. Residues 130–160 lie on the Periplasmic side of the membrane; that stretch reads PRSFLDGGVVVLGRKGFTNGGGGTSIGGRPW. Residues 161-181 traverse the membrane as a helical segment; it reads LQKVAALSVAISLTIANAATF. Residues 182–201 are Extracellular-facing; that stretch reads RAAEQQYSWGVQNAKQLQED. A helical membrane pass occupies residues 202–222; sequence VLGGAELKIIRIISDTFLWLA. Topologically, residues 223 to 237 are periplasmic; that stretch reads QAQTLIRLFPRQREK. Residues 238–258 form a helical membrane-spanning segment; sequence VIIKWTAFALITLDVIFQSLN. Topologically, residues 259–275 are extracellular; sequence SFKYGGSDLTRPKFTEA. Residues 276 to 296 form a helical membrane-spanning segment; the sequence is VPALSYLFALALGVLYAAWVL. The Periplasmic portion of the chain corresponds to 297 to 314; that stretch reads YYSIMKKRYAFYHPLMKN. The chain crosses the membrane as a helical span at residues 315–335; sequence MILVAVLSVVSILVPVVFFIL. The Extracellular portion of the chain corresponds to 336–341; it reads DISKPD. Residues 342 to 362 form a helical membrane-spanning segment; the sequence is FAGWGDYVRWVGAAAASVIVW. Over 363-778 the chain is Periplasmic; the sequence is EWVERIEALE…RSDSSTTPSP (416 aa). 3 disordered regions span residues 394–499, 514–605, and 660–778; these read ASQS…DTTS, ELTS…DENS, and ELNH…TPSP. Over residues 446–456 the composition is skewed to basic and acidic residues; that stretch reads HRTEPSSRNEP. The segment covering 457–466 has biased composition (polar residues); that stretch reads NEGSSPVAET. 2 stretches are compositionally biased toward basic and acidic residues: residues 588–605 and 661–675; these read FVTR…DENS and LNHS…EESR. Polar residues predominate over residues 720–732; the sequence is PIVTQGSFTNNRY. The segment covering 749 to 759 has biased composition (low complexity); that stretch reads ARAPSQPQSPS. Positions 769–778 are enriched in polar residues; sequence RSDSSTTPSP.

The protein belongs to the palH/RIM21 family.

It localises to the cell membrane. Required for the proteolytic cleavage of the transcription factor pacc-1 in response to alkaline ambient pH. The sequence is that of pH-response regulator protein palH/prr-4 (prr-4) from Neurospora crassa (strain ATCC 24698 / 74-OR23-1A / CBS 708.71 / DSM 1257 / FGSC 987).